A 180-amino-acid chain; its full sequence is Putative manganese efflux pump MntP (180 aa).

Helical transmembrane passes span 6 to 26, 34 to 54, 67 to 87, 102 to 122, 131 to 151, and 160 to 180; these read LMAL…GIGL, ILQI…TGWL, AAVI…WAAW, FWGL…AGFT, LLAA…GLVF, and GERA…KLFF.

The protein belongs to the MntP (TC 9.B.29) family.

It localises to the cell membrane. Its function is as follows. Probably functions as a manganese efflux pump. The sequence is that of Putative manganese efflux pump MntP from Pelotomaculum thermopropionicum (strain DSM 13744 / JCM 10971 / SI).